A 309-amino-acid polypeptide reads, in one-letter code: 2-dehydropantoate 2-reductase (309 aa).

NADP(+) contacts are provided by residues 7–12 (GAGSIG), Arg31, and Lys74. Residues 8–10 (AGS), Arg31, Lys74, and Cys84 contribute to the CoA site. The NADP(+) site is built by Asn100 and Ala124. Lys180 serves as the catalytic Proton donor. Substrate-binding positions include Lys180, Asn184, Asn188, Asn198, and 247–250 (NYNS). Position 257 (Arg257) interacts with CoA. Glu262 provides a ligand contact to NADP(+).

The protein belongs to the ketopantoate reductase family. As to quaternary structure, homodimer.

The protein resides in the cytoplasm. It carries out the reaction (R)-pantoate + NAD(+) = 2-dehydropantoate + NADH + H(+). The catalysed reaction is (R)-pantoate + NADP(+) = 2-dehydropantoate + NADPH + H(+). Its pathway is cofactor biosynthesis; coenzyme A biosynthesis. Regulated by feedback inhibition by coenzyme A (CoA). CoA acts by competing with NAD(P)H. A disulfide bond is formed between CoA and Cys-84, which indicates an irreversible inhibition upon binding of CoA. Its function is as follows. Catalyzes the NAD(P)H-dependent reduction of ketopantoate into pantoic acid. Prefers NADH rather than NADPH as the electron donor. The sequence is that of 2-dehydropantoate 2-reductase from Thermococcus kodakarensis (strain ATCC BAA-918 / JCM 12380 / KOD1) (Pyrococcus kodakaraensis (strain KOD1)).